The primary structure comprises 558 residues: D-xylose-proton symporter-like 3, chloroplastic (558 aa).

The N-terminal 31 residues, 1 to 31 (MAFAVSVQSHFAIRALKRDHFKNPSPRTFCS), are a transit peptide targeting the chloroplast. 12 helical membrane passes run 98-118 (VILP…DIGA), 146-166 (LVVS…YGVA), 175-195 (LIIA…APDL), 197-217 (ILLV…HGAP), 238-258 (LFIV…IDVV), 264-284 (MYGF…SLPA), 359-379 (ALTI…PSVL), 400-420 (VSVI…AKVD), 426-446 (PLLI…SAYY), 449-469 (LGGF…CYQI), 491-511 (GISL…FAFS), and 522-542 (LFLL…LVVP).

It belongs to the major facilitator superfamily. Sugar transporter (TC 2.A.1.1) family.

The protein localises to the plastid. It localises to the chloroplast membrane. This chain is D-xylose-proton symporter-like 3, chloroplastic, found in Arabidopsis thaliana (Mouse-ear cress).